The primary structure comprises 394 residues: Probable purine permease 8 (394 aa).

10 consecutive transmembrane segments (helical) span residues Trp-45–Leu-65, Thr-77–Phe-97, Phe-113–Asn-133, Val-139–Phe-159, Phe-172–Val-192, Val-208–Val-228, Leu-247–Gly-267, Thr-289–Phe-309, Phe-315–Phe-335, and Ile-344–Asp-364. A disordered region spans residues Thr-373–Val-394. A compositionally biased stretch (basic and acidic residues) spans Pro-383–Val-394.

It belongs to the purine permeases (TC 2.A.7.14) family.

It localises to the membrane. The sequence is that of Probable purine permease 8 (PUP8) from Arabidopsis thaliana (Mouse-ear cress).